The primary structure comprises 333 residues: MAFADRLLAAWYAGHPALALLRPLEALYRRVVTRKRARFLRGDSASYRAPVPVIVVGNITVGGTGKTPMILWLIEHCRQQGLKVGVVSRGYGARPPRLPWRVQADQPADEAGDEPLLIVQRTGVPLMIDPDRARAVQALLASEPLDLILCDDGMQHYRLARDLELVLIDAARGLGNGRCLPAGPLREPADRLREADAVLFNGASEDRTEGFGFRLQPSALVNVRTGERRALDHFPAGQRLHAVAGIGNPQRFFNTLLGLNWQPVPHPFADHAQFSARSLAFSPPLPLVMTEKDAVKCRAFAADDWWYLAVEAQPTPAFSAWFDNQLQRLLRKP.

60 to 67 (TVGGTGKT) is a binding site for ATP.

Belongs to the LpxK family.

The catalysed reaction is a lipid A disaccharide + ATP = a lipid IVA + ADP + H(+). The protein operates within glycolipid biosynthesis; lipid IV(A) biosynthesis; lipid IV(A) from (3R)-3-hydroxytetradecanoyl-[acyl-carrier-protein] and UDP-N-acetyl-alpha-D-glucosamine: step 6/6. Functionally, transfers the gamma-phosphate of ATP to the 4'-position of a tetraacyldisaccharide 1-phosphate intermediate (termed DS-1-P) to form tetraacyldisaccharide 1,4'-bis-phosphate (lipid IVA). This chain is Tetraacyldisaccharide 4'-kinase, found in Pseudomonas putida (strain ATCC 700007 / DSM 6899 / JCM 31910 / BCRC 17059 / LMG 24140 / F1).